A 103-amino-acid chain; its full sequence is UPF0235 protein RL4503 (103 aa).

The protein belongs to the UPF0235 family.

The protein is UPF0235 protein RL4503 of Rhizobium johnstonii (strain DSM 114642 / LMG 32736 / 3841) (Rhizobium leguminosarum bv. viciae).